The following is a 143-amino-acid chain: Transcriptional regulator MraZ (143 aa).

2 consecutive SpoVT-AbrB domains span residues 5–47 (THSP…SQKE) and 76–119 (ASDE…DADA).

This sequence belongs to the MraZ family. As to quaternary structure, forms oligomers.

Its subcellular location is the cytoplasm. The protein resides in the nucleoid. This is Transcriptional regulator MraZ from Paenarthrobacter aurescens (strain TC1).